We begin with the raw amino-acid sequence, 272 residues long: Formamidopyrimidine-DNA glycosylase (272 aa).

The Schiff-base intermediate with DNA role is filled by Pro2. The active-site Proton donor is Glu3. Lys58 functions as the Proton donor; for beta-elimination activity in the catalytic mechanism. Positions 92, 111, and 153 each coordinate DNA. Residues 238–272 (NVYGRGGEPCPVCAKPLTEKPLSQRTTVYCTHCQN) form an FPG-type zinc finger. Residue Arg262 is the Proton donor; for delta-elimination activity of the active site.

Belongs to the FPG family. Monomer. The cofactor is Zn(2+).

It carries out the reaction Hydrolysis of DNA containing ring-opened 7-methylguanine residues, releasing 2,6-diamino-4-hydroxy-5-(N-methyl)formamidopyrimidine.. The catalysed reaction is 2'-deoxyribonucleotide-(2'-deoxyribose 5'-phosphate)-2'-deoxyribonucleotide-DNA = a 3'-end 2'-deoxyribonucleotide-(2,3-dehydro-2,3-deoxyribose 5'-phosphate)-DNA + a 5'-end 5'-phospho-2'-deoxyribonucleoside-DNA + H(+). Involved in base excision repair of DNA damaged by oxidation or by mutagenic agents. Acts as a DNA glycosylase that recognizes and removes damaged bases. Has a preference for oxidized purines, such as 7,8-dihydro-8-oxoguanine (8-oxoG). Has AP (apurinic/apyrimidinic) lyase activity and introduces nicks in the DNA strand. Cleaves the DNA backbone by beta-delta elimination to generate a single-strand break at the site of the removed base with both 3'- and 5'-phosphates. This chain is Formamidopyrimidine-DNA glycosylase, found in Teredinibacter turnerae (strain ATCC 39867 / T7901).